The chain runs to 96 residues: Gastrolith matrix protein (96 aa).

Tandem repeats lie at residues 11–15 (GSAGF), 16–20 (GSTNF), 21–25 (GSSGF), 30–34 (GSTGF), 35–39 (GSAGF), 50–54 (GSAAF), 55–59 (GSSSF), 65–69 (GSTGF), and 70–74 (GSSSF). The 9 X 5 AA tandem repeat of G-S-X-X-F stretch occupies residues 11-74 (GSAGFGSTNF…GSTGFGSSSF (64 aa)). Residues 75–96 (GSTSGLPYLVVIPNNPAVGGLR) form a disordered region.

The N-terminus is blocked. Expressed in the gastroliths.

The protein localises to the secreted. Functionally, associates with chitin and plays a role in calcification. The protein is Gastrolith matrix protein of Procambarus clarkii (Red swamp crayfish).